A 240-amino-acid chain; its full sequence is 2,3-bisphosphoglycerate-dependent phosphoglycerate mutase (240 aa).

Substrate contacts are provided by residues 5–12, 18–19, Arg57, 84–87, Lys95, 111–112, and 180–181; these read RHGESVWN, TG, ERHY, RR, and GN. Residue His6 is the Tele-phosphohistidine intermediate of the active site. Glu84 acts as the Proton donor/acceptor in catalysis.

This sequence belongs to the phosphoglycerate mutase family. BPG-dependent PGAM subfamily. As to quaternary structure, homodimer.

The enzyme catalyses (2R)-2-phosphoglycerate = (2R)-3-phosphoglycerate. Its pathway is carbohydrate degradation; glycolysis; pyruvate from D-glyceraldehyde 3-phosphate: step 3/5. Its function is as follows. Catalyzes the interconversion of 2-phosphoglycerate and 3-phosphoglycerate. This chain is 2,3-bisphosphoglycerate-dependent phosphoglycerate mutase, found in Nitrosococcus oceani (strain ATCC 19707 / BCRC 17464 / JCM 30415 / NCIMB 11848 / C-107).